The following is a 713-amino-acid chain: Mitochondrial intermediate peptidase (713 aa).

A mitochondrion-targeting transit peptide spans 1 to 35 (MLCVGRLGGLGARAAALPPRRAGRGILEAGIRARR). Lysine 126 carries the N6-acetyllysine modification. Histidine 495 contacts Zn(2+). Glutamate 496 is a catalytic residue. Histidine 499 and histidine 502 together coordinate Zn(2+).

The protein belongs to the peptidase M3 family. Monomer. Zn(2+) is required as a cofactor.

Its subcellular location is the mitochondrion matrix. It carries out the reaction Release of an N-terminal octapeptide as second stage of processing of some proteins imported into the mitochondrion.. With respect to regulation, activity is divalent cation-dependent. It is stimulated by manganese, magnesium or calcium ions and reversibly inhibited by zinc, cobalt and iron. Cleaves proteins, imported into the mitochondrion, to their mature size. The protein is Mitochondrial intermediate peptidase (MIPEP) of Pongo abelii (Sumatran orangutan).